Here is a 1076-residue protein sequence, read N- to C-terminus: Nickel and cobalt resistance protein CnrA (1076 aa).

Transmembrane regions (helical) follow at residues W14 to L34, T366 to L386, R390 to M410, N418 to V438, P475 to G495, S502 to F522, P561 to F581, R903 to I923, L928 to L948, A959 to A979, R1003 to T1023, and T1035 to L1055.

It belongs to the resistance-nodulation-cell division (RND) (TC 2.A.6) family.

It localises to the cell inner membrane. Functionally, the products of the genes cnrA, cnrB, and cnrC are likely to form a membrane-bound protein complex catalyzing an energy-dependent efflux of Ni(2+) and Co(2+). The mechanism of action of the CnrCBA complex may be that of a proton/cation antiporter. The sequence is that of Nickel and cobalt resistance protein CnrA (cnrA) from Cupriavidus metallidurans (strain ATCC 43123 / DSM 2839 / NBRC 102507 / CH34) (Ralstonia metallidurans).